A 356-amino-acid polypeptide reads, in one-letter code: Dual-specificity RNA methyltransferase RlmN (356 aa).

The active-site Proton acceptor is the Glu-87. In terms of domain architecture, Radical SAM core spans 106–339; the sequence is QEAKYTICVS…CTIRDSKGID (234 aa). An intrachain disulfide couples Cys-113 to Cys-344. Residues Cys-120, Cys-124, and Cys-127 each contribute to the [4Fe-4S] cluster site. Residues 170–171, Ser-202, 225–227, and Asn-301 each bind S-adenosyl-L-methionine; these read GE and SLH. Cys-344 serves as the catalytic S-methylcysteine intermediate.

The protein belongs to the radical SAM superfamily. RlmN family. [4Fe-4S] cluster serves as cofactor.

Its subcellular location is the cytoplasm. The catalysed reaction is adenosine(2503) in 23S rRNA + 2 reduced [2Fe-2S]-[ferredoxin] + 2 S-adenosyl-L-methionine = 2-methyladenosine(2503) in 23S rRNA + 5'-deoxyadenosine + L-methionine + 2 oxidized [2Fe-2S]-[ferredoxin] + S-adenosyl-L-homocysteine. The enzyme catalyses adenosine(37) in tRNA + 2 reduced [2Fe-2S]-[ferredoxin] + 2 S-adenosyl-L-methionine = 2-methyladenosine(37) in tRNA + 5'-deoxyadenosine + L-methionine + 2 oxidized [2Fe-2S]-[ferredoxin] + S-adenosyl-L-homocysteine. Specifically methylates position 2 of adenine 2503 in 23S rRNA and position 2 of adenine 37 in tRNAs. m2A2503 modification seems to play a crucial role in the proofreading step occurring at the peptidyl transferase center and thus would serve to optimize ribosomal fidelity. This chain is Dual-specificity RNA methyltransferase RlmN, found in Sulfurimonas denitrificans (strain ATCC 33889 / DSM 1251) (Thiomicrospira denitrificans (strain ATCC 33889 / DSM 1251)).